We begin with the raw amino-acid sequence, 143 residues long: Putative pre-16S rRNA nuclease (143 aa).

This sequence belongs to the YqgF nuclease family.

The protein resides in the cytoplasm. Functionally, could be a nuclease involved in processing of the 5'-end of pre-16S rRNA. This Lactobacillus johnsonii (strain CNCM I-12250 / La1 / NCC 533) protein is Putative pre-16S rRNA nuclease.